A 235-amino-acid chain; its full sequence is Phosphoribosylaminoimidazole-succinocarboxamide synthase (235 aa).

This sequence belongs to the SAICAR synthetase family.

The catalysed reaction is 5-amino-1-(5-phospho-D-ribosyl)imidazole-4-carboxylate + L-aspartate + ATP = (2S)-2-[5-amino-1-(5-phospho-beta-D-ribosyl)imidazole-4-carboxamido]succinate + ADP + phosphate + 2 H(+). The protein operates within purine metabolism; IMP biosynthesis via de novo pathway; 5-amino-1-(5-phospho-D-ribosyl)imidazole-4-carboxamide from 5-amino-1-(5-phospho-D-ribosyl)imidazole-4-carboxylate: step 1/2. This chain is Phosphoribosylaminoimidazole-succinocarboxamide synthase, found in Streptococcus thermophilus (strain ATCC BAA-250 / LMG 18311).